The following is a 60-amino-acid chain: Sperm protamine P1 (60 aa).

Residues 1–60 (MARYRHSRSRSRSRYRRRRRRRSRYRSQRRRYRGRRRRRSRRGRRRGYSRRRYSRRRRRY) are disordered.

This sequence belongs to the protamine P1 family. In terms of tissue distribution, testis.

Its subcellular location is the nucleus. It localises to the chromosome. In terms of biological role, protamines substitute for histones in the chromatin of sperm during the haploid phase of spermatogenesis. They compact sperm DNA into a highly condensed, stable and inactive complex. This Osphranter rufus (Red kangaroo) protein is Sperm protamine P1 (PRM1).